The primary structure comprises 412 residues: Vacuolar calcium ion transporter (412 aa).

Residues 1–55 (MIERLKIAKNRLEAMNSFNFPAQDRHERAPLLGSEYDHSMARQLSLLNVVGMTKS) lie on the Cytoplasmic side of the membrane. A helical transmembrane segment spans residues 56–76 (VLMSSYFNLMLVFVPIGLIAG). Over 77-83 (WFEWNAK) the chain is Lumenal. A helical transmembrane segment spans residues 84 to 104 (SVFILNMLAIIPLASLLSFAT). Residues 105–114 (EQLSIISGPT) are Cytoplasmic-facing. A helical transmembrane segment spans residues 115-135 (LGALLNASFGNAIELIVGVLA). Over 136–148 (LKRGELRIVQSSL) the chain is Lumenal. A helical membrane pass occupies residues 149-169 (LGSILSNLLLVFGMCLVTTGI). Over 170–177 (RREITTFN) the chain is Cytoplasmic. Residues 178–198 (ITVAQTMIAMLALSTATILIP) form a helical membrane-spanning segment. At 199–215 (ATFHYSLPDNANSENAL) the chain is on the lumenal side. A helical transmembrane segment spans residues 216 to 236 (LHVSRGTAVIVLIVYVLLLVF). At 237 to 264 (QLKTHKHVCHDPSEVEEETEPRILGLRS) the chain is on the cytoplasmic side. Residues 265–285 (SIAMLAIVTVFVSLCADYLVG) form a helical membrane-spanning segment. The Lumenal segment spans residues 286-299 (SIDQLVEEVNISKT). A helical transmembrane segment spans residues 300-320 (FVGLVILPVVGNAAEHVTAIV). Topologically, residues 321-334 (VSYRGQMDLALGVA) are cytoplasmic. A helical transmembrane segment spans residues 335–355 (IGSSIQIALFLAPFLVIVGWI). Residues 356–358 (ISQ) lie on the Lumenal side of the membrane. A helical transmembrane segment spans residues 359–379 (PLTLYFESLETVILFVSVFLV). The Cytoplasmic portion of the chain corresponds to 380–389 (NYLIQDGATH). A helical membrane pass occupies residues 390 to 410 (WLEGVQLLALYAIVVLAFFYY). Residues 411–412 (PQ) lie on the Lumenal side of the membrane.

This sequence belongs to the Ca(2+):cation antiporter (CaCA) (TC 2.A.19) family.

It localises to the vacuole membrane. It is found in the endoplasmic reticulum membrane. Has a role in promoting intracellular calcium ion sequestration via the exchange of calcium ions for hydrogen ions across the vacuolar membrane. Involved also in manganese ion homeostasis via its uptake into the vacuole. The protein is Vacuolar calcium ion transporter (vcx1) of Schizosaccharomyces pombe (strain 972 / ATCC 24843) (Fission yeast).